We begin with the raw amino-acid sequence, 70 residues long: Spore germination protein-like protein YpzD (70 aa).

It belongs to the GerPA/GerPF family.

This is Spore germination protein-like protein YpzD (ypzD) from Bacillus subtilis (strain 168).